The primary structure comprises 122 residues: Large ribosomal subunit protein uL14 (122 aa).

The protein belongs to the universal ribosomal protein uL14 family. Part of the 50S ribosomal subunit. Forms a cluster with proteins L3 and L19. In the 70S ribosome, L14 and L19 interact and together make contacts with the 16S rRNA in bridges B5 and B8.

Functionally, binds to 23S rRNA. Forms part of two intersubunit bridges in the 70S ribosome. The polypeptide is Large ribosomal subunit protein uL14 (Pelagibacter ubique (strain HTCC1062)).